The sequence spans 324 residues: 1-deoxyxylulose-5-phosphate synthase YajO (324 aa).

Tyrosine 61 serves as the catalytic Proton donor.

Belongs to the aldo/keto reductase family. Aldo/keto reductase 2 subfamily.

The catalysed reaction is D-ribulose 5-phosphate + AH2 = 1-deoxy-D-xylulose 5-phosphate + A + H2O. With respect to regulation, NADH, NADPH or ATP do not increase activity. Its function is as follows. Catalyzes the conversion of ribulose 5-phosphate (Ru5P) to 1-deoxy-D-xylulose 5-phosphate (DXP), providing a direct route from pentoses to terpenes. May play a role in biosynthesis of DXP under conditions of thiamine starvation. This is 1-deoxyxylulose-5-phosphate synthase YajO (yajO) from Escherichia coli (strain K12).